The chain runs to 426 residues: 26S proteasome regulatory subunit 7 homolog A (426 aa).

209–216 (GPPGTGKT) is a binding site for ATP. Residues Lys400 and Lys415 each participate in a glycyl lysine isopeptide (Lys-Gly) (interchain with G-Cter in ubiquitin) cross-link.

Belongs to the AAA ATPase family. In terms of assembly, component of the 19S regulatory particle (RP/PA700) base subcomplex of the 26S proteasome. The 26S proteasome is composed of a core protease (CP), known as the 20S proteasome, capped at one or both ends by the 19S regulatory particle (RP/PA700). The RP/PA700 complex is composed of at least 17 different subunits in two subcomplexes, the base and the lid, which form the portions proximal and distal to the 20S proteolytic core, respectively.

It is found in the cytoplasm. It localises to the nucleus. In terms of biological role, the 26S proteasome is involved in the ATP-dependent degradation of ubiquitinated proteins. The regulatory (or ATPase) complex confers ATP dependency and substrate specificity to the 26S complex. The protein is 26S proteasome regulatory subunit 7 homolog A (RPT1A) of Arabidopsis thaliana (Mouse-ear cress).